Reading from the N-terminus, the 426-residue chain is GTPase Obg (426 aa).

Residues 1–158 (MFVDQVSVYV…RNIKVELKLI (158 aa)) form the Obg domain. Disordered regions lie at residues 66-86 (GKRG…DPLV) and 119-146 (GGRG…GEPG). The OBG-type G domain maps to 159 to 329 (ADVGLVGFPS…LLFAIADKLE (171 aa)). Residues 165 to 172 (GFPSVGKS), 190 to 194 (FTTLS), 212 to 215 (DLPG), 282 to 285 (NKMD), and 310 to 312 (SAL) each bind GTP. The Mg(2+) site is built by S172 and T192. One can recognise an OCT domain in the interval 348–426 (RYQKEEDPFH…LLEYEFEFIE (79 aa)).

This sequence belongs to the TRAFAC class OBG-HflX-like GTPase superfamily. OBG GTPase family. As to quaternary structure, monomer. Requires Mg(2+) as cofactor.

The protein resides in the cytoplasm. Functionally, an essential GTPase which binds GTP, GDP and possibly (p)ppGpp with moderate affinity, with high nucleotide exchange rates and a fairly low GTP hydrolysis rate. Plays a role in control of the cell cycle, stress response, ribosome biogenesis and in those bacteria that undergo differentiation, in morphogenesis control. The protein is GTPase Obg of Oceanobacillus iheyensis (strain DSM 14371 / CIP 107618 / JCM 11309 / KCTC 3954 / HTE831).